The sequence spans 605 residues: UvrABC system protein C (605 aa).

The 78-residue stretch at 15 to 92 (GLPGCYLMKN…IQKHQPYFNI (78 aa)) folds into the GIY-YIG domain. A UVR domain is found at 197 to 232 (GHAKKDLTQRMEKAAADMAYERAGDLRDQIRYIEAT).

It belongs to the UvrC family. In terms of assembly, interacts with UvrB in an incision complex.

It is found in the cytoplasm. Functionally, the UvrABC repair system catalyzes the recognition and processing of DNA lesions. UvrC both incises the 5' and 3' sides of the lesion. The N-terminal half is responsible for the 3' incision and the C-terminal half is responsible for the 5' incision. The protein is UvrABC system protein C of Levilactobacillus brevis (strain ATCC 367 / BCRC 12310 / CIP 105137 / JCM 1170 / LMG 11437 / NCIMB 947 / NCTC 947) (Lactobacillus brevis).